The sequence spans 119 residues: UPF0342 protein Athe_0692 (119 aa).

This sequence belongs to the UPF0342 family.

In Caldicellulosiruptor bescii (strain ATCC BAA-1888 / DSM 6725 / KCTC 15123 / Z-1320) (Anaerocellum thermophilum), this protein is UPF0342 protein Athe_0692.